Here is a 158-residue protein sequence, read N- to C-terminus: Ribosome maturation factor RimP (158 aa).

It belongs to the RimP family.

It is found in the cytoplasm. Functionally, required for maturation of 30S ribosomal subunits. The protein is Ribosome maturation factor RimP of Pseudomonas fluorescens (strain Pf0-1).